The chain runs to 134 residues: Small ribosomal subunit protein uS11 (134 aa).

Belongs to the universal ribosomal protein uS11 family. Part of the 30S ribosomal subunit. Interacts with proteins S7 and S18. Binds to IF-3.

Its function is as follows. Located on the platform of the 30S subunit, it bridges several disparate RNA helices of the 16S rRNA. Forms part of the Shine-Dalgarno cleft in the 70S ribosome. This Micrococcus luteus (strain ATCC 4698 / DSM 20030 / JCM 1464 / CCM 169 / CCUG 5858 / IAM 1056 / NBRC 3333 / NCIMB 9278 / NCTC 2665 / VKM Ac-2230) (Micrococcus lysodeikticus) protein is Small ribosomal subunit protein uS11.